Reading from the N-terminus, the 233-residue chain is Peroxisomal membrane protein 11-5 (233 aa).

Topologically, residues 1-92 are cytoplasmic; the sequence is MSSLESARAD…PLILLGKSKN (92 aa). Residues 93 to 113 form a helical membrane-spanning segment; that stretch reads ALLSTFLFLDQIVWAGRTGIY. The Lumenal segment spans residues 114-206; the sequence is KNKERAEFLS…LLQLAPKKVT (93 aa). Residues 207-226 form a helical membrane-spanning segment; that stretch reads PRVTGAFGFASSLIACYQLL.

It belongs to the peroxin-11 family. In terms of tissue distribution, expressed in seedlings, roots, shoots, leaf sheaths, flag leaf, panicles, spikelets, and endosperm.

It is found in the peroxisome membrane. In terms of biological role, involved in peroxisomal proliferation. The polypeptide is Peroxisomal membrane protein 11-5 (PEX11-5) (Oryza sativa subsp. japonica (Rice)).